Reading from the N-terminus, the 483-residue chain is Shaker-related potassium channel tsha2 (483 aa).

Residues 1–165 lie on the Cytoplasmic side of the membrane; sequence MTVVSCEIQD…YPESSGPARM (165 aa). The chain crosses the membrane as a helical span at residues 166-186; it reads IAVVSVSVIVISIVIFCLETL. Over 187–220 the chain is Extracellular; sequence PQFREDTSANLPLSNHHTTNGTTLHKKPNLFTDP. A helical transmembrane segment spans residues 221-241; the sequence is FFMVETLCIVWFSFEFLVRFL. The Cytoplasmic portion of the chain corresponds to 242–252; the sequence is SCPSKPAFFKN. A lipid anchor (S-palmitoyl cysteine) is attached at Cys-243. Residues 253 to 273 form a helical membrane-spanning segment; the sequence is AMNSIDILAIAPYFITLGLEL. Residues 274–324 lie on the Extracellular side of the membrane; that stretch reads AEQQEAGSEQAMSLAILRVIRLVRVFRIFKLSRHSKGLQILGQTLHASISE. Residues 325-345 form a helical; Voltage-sensor membrane-spanning segment; it reads LGLLIFFLLIGVILFSSAVYF. Topologically, residues 346-353 are cytoplasmic; the sequence is AEADDPES. Residues 354-374 traverse the membrane as a helical segment; sequence GFSSIPAAFWWAVVSMTTVGY. The short motif at 371-376 is the Selectivity filter element; sequence TVGYGD. Residues 375–385 lie on the Extracellular side of the membrane; that stretch reads GDMCPVTIGGK. The helical transmembrane segment at 386–406 threads the bilayer; it reads IVGSMCAIAGVLTIALPVPVI. Topologically, residues 407-483 are cytoplasmic; that stretch reads VSNFNYFYHR…EHYTGKLTDV (77 aa). Tyr-426 bears the Phosphotyrosine mark. Thr-430 is modified (phosphothreonine). Polar residues predominate over residues 440–452; it reads EFKSTSDSRQSLT. The tract at residues 440 to 459 is disordered; sequence EFKSTSDSRQSLTKSEDTEE. Positions 481-483 match the PDZ-binding motif; the sequence is TDV.

Belongs to the potassium channel family. A (Shaker) (TC 1.A.1.2) subfamily. As to quaternary structure, heterotetramer of potassium channel proteins. Binds PDZ domains of dlg1, dlg2 and dlg4. In terms of tissue distribution, expressed in oligodendrocytes and astrocytes.

The protein localises to the membrane. Mediates the voltage-dependent potassium ion permeability of excitable membranes. Assuming opened or closed conformations in response to the voltage difference across the membrane, the protein forms a potassium-selective channel through which potassium ions may pass in accordance with their electrochemical gradient. This Oncorhynchus mykiss (Rainbow trout) protein is Shaker-related potassium channel tsha2.